The following is a 388-amino-acid chain: Methylthioribose-1-phosphate isomerase (388 aa).

Asp253 serves as the catalytic Proton donor.

This sequence belongs to the eIF-2B alpha/beta/delta subunits family. MtnA subfamily.

The protein localises to the cytoplasm. The protein resides in the nucleus. It catalyses the reaction 5-(methylsulfanyl)-alpha-D-ribose 1-phosphate = 5-(methylsulfanyl)-D-ribulose 1-phosphate. The protein operates within amino-acid biosynthesis; L-methionine biosynthesis via salvage pathway; L-methionine from S-methyl-5-thio-alpha-D-ribose 1-phosphate: step 1/6. Its function is as follows. Catalyzes the interconversion of methylthioribose-1-phosphate (MTR-1-P) into methylthioribulose-1-phosphate (MTRu-1-P). This is Methylthioribose-1-phosphate isomerase from Fusarium vanettenii (strain ATCC MYA-4622 / CBS 123669 / FGSC 9596 / NRRL 45880 / 77-13-4) (Fusarium solani subsp. pisi).